We begin with the raw amino-acid sequence, 70 residues long: Cytochrome c oxidase subunit 8B, mitochondrial (70 aa).

The transit peptide at 1–24 (MPRLPPILRLLQAPAKFTVVPKAH) directs the protein to the mitochondrion. At 25–38 (VSAKPAKTPTSAVE) the chain is on the mitochondrial matrix side. A helical transmembrane segment spans residues 39-60 (QAVGISAIVVGFMVPAGWVLAH). Over 61–70 (LESYKKSSAA) the chain is Mitochondrial intermembrane.

This sequence belongs to the cytochrome c oxidase VIII family. As to quaternary structure, component of the cytochrome c oxidase (complex IV, CIV), a multisubunit enzyme composed of 14 subunits. The complex is composed of a catalytic core of 3 subunits MT-CO1, MT-CO2 and MT-CO3, encoded in the mitochondrial DNA, and 11 supernumerary subunits COX4I, COX5A, COX5B, COX6A, COX6B, COX6C, COX7A, COX7B, COX7C, COX8 and NDUFA4, which are encoded in the nuclear genome. The complex exists as a monomer or a dimer and forms supercomplexes (SCs) in the inner mitochondrial membrane with NADH-ubiquinone oxidoreductase (complex I, CI) and ubiquinol-cytochrome c oxidoreductase (cytochrome b-c1 complex, complex III, CIII), resulting in different assemblies (supercomplex SCI(1)III(2)IV(1) and megacomplex MCI(2)III(2)IV(2)).

It is found in the mitochondrion inner membrane. Its pathway is energy metabolism; oxidative phosphorylation. In terms of biological role, component of the cytochrome c oxidase, the last enzyme in the mitochondrial electron transport chain which drives oxidative phosphorylation. The respiratory chain contains 3 multisubunit complexes succinate dehydrogenase (complex II, CII), ubiquinol-cytochrome c oxidoreductase (cytochrome b-c1 complex, complex III, CIII) and cytochrome c oxidase (complex IV, CIV), that cooperate to transfer electrons derived from NADH and succinate to molecular oxygen, creating an electrochemical gradient over the inner membrane that drives transmembrane transport and the ATP synthase. Cytochrome c oxidase is the component of the respiratory chain that catalyzes the reduction of oxygen to water. Electrons originating from reduced cytochrome c in the intermembrane space (IMS) are transferred via the dinuclear copper A center (CU(A)) of subunit 2 and heme A of subunit 1 to the active site in subunit 1, a binuclear center (BNC) formed by heme A3 and copper B (CU(B)). The BNC reduces molecular oxygen to 2 water molecules using 4 electrons from cytochrome c in the IMS and 4 protons from the mitochondrial matrix. The protein is Cytochrome c oxidase subunit 8B, mitochondrial (Cox8b) of Mus musculus (Mouse).